Here is a 141-residue protein sequence, read N- to C-terminus: Aspartate 1-decarboxylase 1 (141 aa).

The Schiff-base intermediate with substrate; via pyruvic acid role is filled by Ser-25. Ser-25 carries the pyruvic acid (Ser) modification. Thr-57 serves as a coordination point for substrate. The active-site Proton donor is Tyr-58. Gly-73–Ala-75 contributes to the substrate binding site.

It belongs to the PanD family. As to quaternary structure, heterooctamer of four alpha and four beta subunits. Pyruvate serves as cofactor. Post-translationally, is synthesized initially as an inactive proenzyme, which is activated by self-cleavage at a specific serine bond to produce a beta-subunit with a hydroxyl group at its C-terminus and an alpha-subunit with a pyruvoyl group at its N-terminus.

The protein localises to the cytoplasm. It carries out the reaction L-aspartate + H(+) = beta-alanine + CO2. It participates in cofactor biosynthesis; (R)-pantothenate biosynthesis; beta-alanine from L-aspartate: step 1/1. Its function is as follows. Catalyzes the pyruvoyl-dependent decarboxylation of aspartate to produce beta-alanine. This chain is Aspartate 1-decarboxylase 1, found in Paenarthrobacter aurescens (strain TC1).